The chain runs to 309 residues: Ribokinase (309 aa).

Residues 14–16 (NAD), 42–46 (GKGAN), and Glu-143 each bind substrate. ATP contacts are provided by residues Asn-187 and 223–228 (TLGSRG). K(+) is bound by residues Asp-249 and Ile-251. ATP is bound by residues 254-255 (GD) and His-279. Asp-255 is a substrate binding site. Residue Asp-255 is the Proton acceptor of the active site. 4 residues coordinate K(+): Ala-285, Arg-288, Gly-290, and Ser-294.

It belongs to the carbohydrate kinase PfkB family. Ribokinase subfamily. In terms of assembly, homodimer. It depends on Mg(2+) as a cofactor.

It is found in the cytoplasm. It catalyses the reaction D-ribose + ATP = D-ribose 5-phosphate + ADP + H(+). Its pathway is carbohydrate metabolism; D-ribose degradation; D-ribose 5-phosphate from beta-D-ribopyranose: step 2/2. Its activity is regulated as follows. Activated by a monovalent cation that binds near, but not in, the active site. The most likely occupant of the site in vivo is potassium. Ion binding induces a conformational change that may alter substrate affinity. Its function is as follows. Catalyzes the phosphorylation of ribose at O-5 in a reaction requiring ATP and magnesium. The resulting D-ribose-5-phosphate can then be used either for sythesis of nucleotides, histidine, and tryptophan, or as a component of the pentose phosphate pathway. The protein is Ribokinase of Escherichia coli O157:H7.